The following is a 324-amino-acid chain: Annexin A10 (324 aa).

Annexin repeat units follow at residues 17–88 (FNPI…GLMY), 89–160 (PPPL…NLVQ), 171–243 (AMAA…AIVL), and 247–318 (DKPA…AICA).

It belongs to the annexin family.

The chain is Annexin A10 (ANXA10) from Homo sapiens (Human).